Consider the following 236-residue polypeptide: Uridylate kinase (236 aa).

10 to 13 provides a ligand contact to ATP; sequence KLSG. G52 serves as a coordination point for UMP. Positions 53 and 57 each coordinate ATP. UMP contacts are provided by residues D72 and 133-140; that span reads TGNPFFTT. T160, Y166, and D169 together coordinate ATP.

The protein belongs to the UMP kinase family. In terms of assembly, homohexamer.

It localises to the cytoplasm. It carries out the reaction UMP + ATP = UDP + ADP. Its pathway is pyrimidine metabolism; CTP biosynthesis via de novo pathway; UDP from UMP (UMPK route): step 1/1. With respect to regulation, inhibited by UTP. Catalyzes the reversible phosphorylation of UMP to UDP. This Bacteroides thetaiotaomicron (strain ATCC 29148 / DSM 2079 / JCM 5827 / CCUG 10774 / NCTC 10582 / VPI-5482 / E50) protein is Uridylate kinase.